A 487-amino-acid polypeptide reads, in one-letter code: GTPase Der (487 aa).

2 consecutive EngA-type G domains span residues 3–166 (PVIA…PRDA) and 193–366 (IKIA…KSAV). GTP-binding positions include 9–16 (GRPNVGKS), 56–60 (DTGGI), 118–121 (NKID), 199–206 (GRPNVGKS), 246–250 (DTAGV), and 311–314 (NKWD). A KH-like domain is found at 367–451 (TRWPTSRLTQ…PIRIEYKGGE (85 aa)). Residues 449-461 (GGENPFEGKKNTL) are compositionally biased toward basic and acidic residues. The segment at 449–487 (GGENPFEGKKNTLTDRQVNKKRRLMSHHKKAEKKRRDKR) is disordered. The segment covering 467–487 (NKKRRLMSHHKKAEKKRRDKR) has biased composition (basic residues).

This sequence belongs to the TRAFAC class TrmE-Era-EngA-EngB-Septin-like GTPase superfamily. EngA (Der) GTPase family. Associates with the 50S ribosomal subunit.

In terms of biological role, GTPase that plays an essential role in the late steps of ribosome biogenesis. The sequence is that of GTPase Der from Pseudomonas putida (strain GB-1).